A 944-amino-acid polypeptide reads, in one-letter code: Protein translocase subunit SecA (944 aa).

ATP contacts are provided by residues Q90, 108-112 (GEGKT), and D509. The segment at 533–565 (VKPEEGHKPPVSPQRKTKSAGFKEEKNKNLSIS) is disordered.

This sequence belongs to the SecA family. Monomer and homodimer. Part of the essential Sec protein translocation apparatus which comprises SecA, SecYEG and auxiliary proteins SecDF. Other proteins may also be involved.

The protein resides in the cell inner membrane. It is found in the cellular thylakoid membrane. The protein localises to the cytoplasm. The enzyme catalyses ATP + H2O + cellular proteinSide 1 = ADP + phosphate + cellular proteinSide 2.. Part of the Sec protein translocase complex. Interacts with the SecYEG preprotein conducting channel. Has a central role in coupling the hydrolysis of ATP to the transfer of proteins into and across the cell membrane, serving as an ATP-driven molecular motor driving the stepwise translocation of polypeptide chains across the membrane. Its function is as follows. Probably participates in protein translocation into and across both the cytoplasmic and thylakoid membranes in cyanobacterial cells. This is Protein translocase subunit SecA from Prochlorococcus marinus (strain NATL1A).